The primary structure comprises 418 residues: Arrestin domain-containing protein 4 (418 aa).

Short sequence motifs (PPxY motif) lie at residues 350–353 (PPNY) and 395–398 (PPLY).

It belongs to the arrestin family. In terms of assembly, interacts with ADRB2. Interacts (via PPxY motifs) with ITCH, NEDD4L and WWP2. Interacts with AVPR2. Identified in a complex containing at least ARRDC4, AVPR2 and HGS. Interacts with SLC11A2; controls the incorporation of SLC11A2 into extracellular vesicles through an ubiquitination-dependent mechanism. Interacts with TRIM65.

The protein localises to the early endosome. It is found in the cell membrane. It localises to the cytoplasmic vesicle. Functions as an adapter recruiting ubiquitin-protein ligases to their specific substrates. Plays a role in endocytosis of activated G protein-coupled receptors (GPCRs). Through an ubiquitination-dependent mechanism also plays a role in the incorporation of SLC11A2 into extracellular vesicles. May play a role in glucose uptake. Participates in innate immune response by promoting IFIH1/MDA5 activation through interaction with TRIM65. This Homo sapiens (Human) protein is Arrestin domain-containing protein 4 (ARRDC4).